The chain runs to 429 residues: GTPase Obg (429 aa).

The Obg domain occupies 1–158 (MFVDQVKIYV…RNVQLELKVL (158 aa)). The disordered stretch occupies residues 124–145 (RGNKRFATPANPAPELSENGEP). Residues 159 to 329 (ADVGLVGFPS…LLLAIADKLE (171 aa)) form the OBG-type G domain. Residues 165–172 (GFPSVGKS), 190–194 (FTTIV), 212–215 (DLPG), 282–285 (NKMD), and 310–312 (SAV) each bind GTP. Residues serine 172 and threonine 192 each coordinate Mg(2+). Residues 351–429 (KYIAEEPDFE…LLDYEFEFMD (79 aa)) form the OCT domain.

This sequence belongs to the TRAFAC class OBG-HflX-like GTPase superfamily. OBG GTPase family. In terms of assembly, monomer. Requires Mg(2+) as cofactor.

Its subcellular location is the cytoplasm. In terms of biological role, an essential GTPase which binds GTP, GDP and possibly (p)ppGpp with moderate affinity, with high nucleotide exchange rates and a fairly low GTP hydrolysis rate. Plays a role in control of the cell cycle, stress response, ribosome biogenesis and in those bacteria that undergo differentiation, in morphogenesis control. The polypeptide is GTPase Obg (Listeria welshimeri serovar 6b (strain ATCC 35897 / DSM 20650 / CCUG 15529 / CIP 8149 / NCTC 11857 / SLCC 5334 / V8)).